A 281-amino-acid chain; its full sequence is Proteasome subunit beta (281 aa).

Residues 1 to 53 constitute a propeptide, removed in mature form; by autocatalysis; sequence MEANTRSTGRLPAAFLTPGSSSFMDFLSDHQPELLPGKRQLPPTQGVIEAPHG. Threonine 54 acts as the Nucleophile in catalysis.

This sequence belongs to the peptidase T1B family. The 20S proteasome core is composed of 14 alpha and 14 beta subunits that assemble into four stacked heptameric rings, resulting in a barrel-shaped structure. The two inner rings, each composed of seven catalytic beta subunits, are sandwiched by two outer rings, each composed of seven alpha subunits. The catalytic chamber with the active sites is on the inside of the barrel. Has a gated structure, the ends of the cylinder being occluded by the N-termini of the alpha-subunits. Is capped by the proteasome-associated ATPase, ARC.

It localises to the cytoplasm. It carries out the reaction Cleavage of peptide bonds with very broad specificity.. It participates in protein degradation; proteasomal Pup-dependent pathway. With respect to regulation, the formation of the proteasomal ATPase ARC-20S proteasome complex, likely via the docking of the C-termini of ARC into the intersubunit pockets in the alpha-rings, may trigger opening of the gate for substrate entry. Interconversion between the open-gate and close-gate conformations leads to a dynamic regulation of the 20S proteasome proteolysis activity. Its function is as follows. Component of the proteasome core, a large protease complex with broad specificity involved in protein degradation. The protein is Proteasome subunit beta of Streptomyces scabiei (strain 87.22).